We begin with the raw amino-acid sequence, 281 residues long: Auxin-responsive protein IAA10 (281 aa).

Disordered regions lie at residues 1–115 (MRGG…VVGW) and 130–157 (AKENTSETDTKKTATNESDVQKDKEEGE). The segment covering 7 to 17 (GPTAGEPPGTE) has biased composition (low complexity). The segment covering 18 to 35 (AEAEEVEESSAGDDEELE) has biased composition (acidic residues). The short motif at 36 to 40 (LGLSL) is the EAR-like (transcriptional repression) element. Composition is skewed to low complexity over residues 36 to 49 (LGLSLGSKKQQQQQ) and 63 to 84 (PAAALSPDSSVSSSSPAAAAAA). A compositionally biased stretch (basic and acidic residues) spans 133-157 (NTSETDTKKTATNESDVQKDKEEGE). The 97-residue stretch at 163 to 259 (AGWVKVNMDG…KRLRIMRTSD (97 aa)) folds into the PB1 domain.

The protein belongs to the Aux/IAA family. In terms of assembly, homodimers and heterodimers. As to expression, highly expressed in flowers. Expressed in shoots.

Its subcellular location is the nucleus. Functionally, aux/IAA proteins are short-lived transcriptional factors that function as repressors of early auxin response genes at low auxin concentrations. The sequence is that of Auxin-responsive protein IAA10 (IAA10) from Oryza sativa subsp. indica (Rice).